Consider the following 264-residue polypeptide: S-adenosylmethionine decarboxylase proenzyme (264 aa).

The Schiff-base intermediate with substrate; via pyruvic acid role is filled by serine 112. Residue serine 112 is modified to Pyruvic acid (Ser); by autocatalysis. Histidine 117 acts as the Proton acceptor; for processing activity in catalysis. Cysteine 140 serves as the catalytic Proton donor; for catalytic activity.

It belongs to the prokaryotic AdoMetDC family. Type 2 subfamily. Heterooctamer of four alpha and four beta chains arranged as a tetramer of alpha/beta heterodimers. Pyruvate is required as a cofactor. In terms of processing, is synthesized initially as an inactive proenzyme. Formation of the active enzyme involves a self-maturation process in which the active site pyruvoyl group is generated from an internal serine residue via an autocatalytic post-translational modification. Two non-identical subunits are generated from the proenzyme in this reaction, and the pyruvate is formed at the N-terminus of the alpha chain, which is derived from the carboxyl end of the proenzyme. The post-translation cleavage follows an unusual pathway, termed non-hydrolytic serinolysis, in which the side chain hydroxyl group of the serine supplies its oxygen atom to form the C-terminus of the beta chain, while the remainder of the serine residue undergoes an oxidative deamination to produce ammonia and the pyruvoyl group blocking the N-terminus of the alpha chain.

It catalyses the reaction S-adenosyl-L-methionine + H(+) = S-adenosyl 3-(methylsulfanyl)propylamine + CO2. It functions in the pathway amine and polyamine biosynthesis; S-adenosylmethioninamine biosynthesis; S-adenosylmethioninamine from S-adenosyl-L-methionine: step 1/1. Its function is as follows. Catalyzes the decarboxylation of S-adenosylmethionine to S-adenosylmethioninamine (dcAdoMet), the propylamine donor required for the synthesis of the polyamines spermine and spermidine from the diamine putrescine. The protein is S-adenosylmethionine decarboxylase proenzyme of Serratia proteamaculans (strain 568).